We begin with the raw amino-acid sequence, 483 residues long: Membrane-bound lytic murein transglycosylase F (483 aa).

An N-terminal signal peptide occupies residues 1–18 (MKGLVIRISVALALLLWA). Residues 19–270 (VDMVFPWQQI…RIEEKYFSHI (252 aa)) form a non-LT domain region. Positions 272–483 (QFDYVDIKSY…IMITPQNSQD (212 aa)) are LT domain. E315 is an active-site residue.

It in the N-terminal section; belongs to the bacterial solute-binding protein 3 family. This sequence in the C-terminal section; belongs to the transglycosylase Slt family.

The protein resides in the cell outer membrane. The enzyme catalyses Exolytic cleavage of the (1-&gt;4)-beta-glycosidic linkage between N-acetylmuramic acid (MurNAc) and N-acetylglucosamine (GlcNAc) residues in peptidoglycan, from either the reducing or the non-reducing ends of the peptidoglycan chains, with concomitant formation of a 1,6-anhydrobond in the MurNAc residue.. Its function is as follows. Murein-degrading enzyme that degrades murein glycan strands and insoluble, high-molecular weight murein sacculi, with the concomitant formation of a 1,6-anhydromuramoyl product. Lytic transglycosylases (LTs) play an integral role in the metabolism of the peptidoglycan (PG) sacculus. Their lytic action creates space within the PG sacculus to allow for its expansion as well as for the insertion of various structures such as secretion systems and flagella. The sequence is that of Membrane-bound lytic murein transglycosylase F from Actinobacillus succinogenes (strain ATCC 55618 / DSM 22257 / CCUG 43843 / 130Z).